A 148-amino-acid chain; its full sequence is uncharacterized protein (148 aa).

This is an uncharacterized protein from Bos taurus (Bovine).